The chain runs to 35 residues: Jingzhaotoxin F5-21.66 (35 aa).

3 cysteine pairs are disulfide-bonded: cysteine 2–cysteine 16, cysteine 9–cysteine 21, and cysteine 15–cysteine 29.

It belongs to the neurotoxin 10 (Hwtx-1) family. 48 (Jztx-F5) subfamily. In terms of tissue distribution, expressed by the venom gland.

Its subcellular location is the secreted. Probable ion channel inhibitor. The polypeptide is Jingzhaotoxin F5-21.66 (Chilobrachys guangxiensis (Chinese earth tiger tarantula)).